Reading from the N-terminus, the 962-residue chain is UvrABC system protein A (962 aa).

38–45 serves as a coordination point for ATP; it reads GISGSGKS. 2 ABC transporter domains span residues 319-597 and 617-944; these read WSKS…PDSL and PSGR…RFLR. 649 to 656 is a binding site for ATP; the sequence is GVSGSGKS. The C4-type zinc-finger motif lies at 748 to 774; that stretch reads CEACGGDGIIKIEMHFLADVYVPCEVC.

Belongs to the ABC transporter superfamily. UvrA family. As to quaternary structure, forms a heterotetramer with UvrB during the search for lesions.

It localises to the cytoplasm. The UvrABC repair system catalyzes the recognition and processing of DNA lesions. UvrA is an ATPase and a DNA-binding protein. A damage recognition complex composed of 2 UvrA and 2 UvrB subunits scans DNA for abnormalities. When the presence of a lesion has been verified by UvrB, the UvrA molecules dissociate. This chain is UvrABC system protein A, found in Methanothermobacter thermautotrophicus (strain ATCC 29096 / DSM 1053 / JCM 10044 / NBRC 100330 / Delta H) (Methanobacterium thermoautotrophicum).